The chain runs to 556 residues: Arginine--tRNA ligase (556 aa).

The short motif at 132–142 is the 'HIGH' region element; sequence ANPTGDLHLGH.

This sequence belongs to the class-I aminoacyl-tRNA synthetase family. In terms of assembly, monomer.

The protein resides in the cytoplasm. The catalysed reaction is tRNA(Arg) + L-arginine + ATP = L-arginyl-tRNA(Arg) + AMP + diphosphate. This Listeria monocytogenes serotype 4b (strain F2365) protein is Arginine--tRNA ligase.